The chain runs to 513 residues: Activin receptor type-2B (513 aa).

The N-terminal stretch at 1 to 18 (MTAPWAALALLWGSLCAG) is a signal peptide. Over 19–137 (SGRGEAETRE…PPPTAPTLLT (119 aa)) the chain is Extracellular. Intrachain disulfides connect cysteine 29–cysteine 59, cysteine 49–cysteine 77, cysteine 84–cysteine 103, cysteine 90–cysteine 102, and cysteine 104–cysteine 109. Asparagine 42 and asparagine 65 each carry an N-linked (GlcNAc...) asparagine glycan. The helical transmembrane segment at 138 to 158 (VLAYSLLPIGGLSLIVLLAFW) threads the bilayer. Residues 159 to 513 (MYRHRKPPYG…VDLLPKESSI (355 aa)) are Cytoplasmic-facing. One can recognise a Protein kinase domain in the interval 190 to 481 (LQLLEIKARG…AGCVEERVSL (292 aa)). ATP-binding positions include 196 to 204 (KARGRFGCV) and lysine 217. Aspartate 322 (proton acceptor) is an active-site residue. The tract at residues 492 to 513 (DCLVSLVTSVTNVDLLPKESSI) is interaction with DYNLT1.

Belongs to the protein kinase superfamily. TKL Ser/Thr protein kinase family. TGFB receptor subfamily. In terms of assembly, forms an activin receptor complex with activin type II receptors such as ACVR1B. Interacts with VPS39. Interacts with DYNLT1. Interacts with BMP3. Interacts with BMP2. Requires Mg(2+) as cofactor. Mn(2+) serves as cofactor. In terms of processing, phosphorylated. Constitutive phosphorylation is in part catalyzed by its own kinase activity.

The protein resides in the cell membrane. The catalysed reaction is L-threonyl-[receptor-protein] + ATP = O-phospho-L-threonyl-[receptor-protein] + ADP + H(+). The enzyme catalyses L-seryl-[receptor-protein] + ATP = O-phospho-L-seryl-[receptor-protein] + ADP + H(+). Its function is as follows. Transmembrane serine/threonine kinase activin type-2 receptor forming an activin receptor complex with activin type-1 serine/threonine kinase receptors (ACVR1, ACVR1B or ACVR1c). Transduces the activin signal from the cell surface to the cytoplasm and is thus regulating many physiological and pathological processes including neuronal differentiation and neuronal survival, hair follicle development and cycling, FSH production by the pituitary gland, wound healing, extracellular matrix production, immunosuppression and carcinogenesis. Activin is also thought to have a paracrine or autocrine role in follicular development in the ovary. Within the receptor complex, the type-2 receptors act as a primary activin receptors (binds activin-A/INHBA, activin-B/INHBB as well as inhibin-A/INHA-INHBA). The type-1 receptors like ACVR1B act as downstream transducers of activin signals. Activin binds to type-2 receptor at the plasma membrane and activates its serine-threonine kinase. The activated receptor type-2 then phosphorylates and activates the type-1 receptor. Once activated, the type-1 receptor binds and phosphorylates the SMAD proteins SMAD2 and SMAD3, on serine residues of the C-terminal tail. Soon after their association with the activin receptor and subsequent phosphorylation, SMAD2 and SMAD3 are released into the cytoplasm where they interact with the common partner SMAD4. This SMAD complex translocates into the nucleus where it mediates activin-induced transcription. Inhibitory SMAD7, which is recruited to ACVR1B through FKBP1A, can prevent the association of SMAD2 and SMAD3 with the activin receptor complex, thereby blocking the activin signal. Activin signal transduction is also antagonized by the binding to the receptor of inhibin-B via the IGSF1 inhibin coreceptor. In Rattus norvegicus (Rat), this protein is Activin receptor type-2B (Acvr2b).